The primary structure comprises 261 residues: Insulin-like growth factor-binding protein-related protein 1 (261 aa).

Positions 1-17 (MWIPLLLVALVVPAIRC) are cleaved as a signal peptide. The 84-residue stretch at 18 to 101 (ERKCGECNPE…DPPEAMCVCL (84 aa)) folds into the IGFBP N-terminal domain. 8 cysteine pairs are disulfide-bonded: C21–C45, C24–C47, C29–C48, C36–C51, C59–C82, C76–C98, C100–C118, and C107–C139. The Kazal-like domain maps to 70–141 (NRGHGPCGEY…RAMHRGPCKS (72 aa)). Residues 143 to 243 (PKITSPPEEA…GESSAAARVV (101 aa)) form the Ig-like C2-type domain. N154 is a glycosylation site (N-linked (GlcNAc...) asparagine). C164 and C227 are joined by a disulfide.

In terms of tissue distribution, expressed by the venom gland.

The protein localises to the secreted. This chain is Insulin-like growth factor-binding protein-related protein 1, found in Cupiennius salei (American wandering spider).